The sequence spans 559 residues: Proline--tRNA ligase (559 aa).

This sequence belongs to the class-II aminoacyl-tRNA synthetase family. ProS type 1 subfamily. Homodimer.

It is found in the cytoplasm. The catalysed reaction is tRNA(Pro) + L-proline + ATP = L-prolyl-tRNA(Pro) + AMP + diphosphate. Catalyzes the attachment of proline to tRNA(Pro) in a two-step reaction: proline is first activated by ATP to form Pro-AMP and then transferred to the acceptor end of tRNA(Pro). As ProRS can inadvertently accommodate and process non-cognate amino acids such as alanine and cysteine, to avoid such errors it has two additional distinct editing activities against alanine. One activity is designated as 'pretransfer' editing and involves the tRNA(Pro)-independent hydrolysis of activated Ala-AMP. The other activity is designated 'posttransfer' editing and involves deacylation of mischarged Ala-tRNA(Pro). The misacylated Cys-tRNA(Pro) is not edited by ProRS. This Ruthia magnifica subsp. Calyptogena magnifica protein is Proline--tRNA ligase.